The sequence spans 288 residues: UDP-3-O-acyl-N-acetylglucosamine deacetylase (288 aa).

Histidine 79, histidine 236, and aspartate 240 together coordinate Zn(2+). Histidine 263 (proton donor) is an active-site residue.

It belongs to the LpxC family. Requires Zn(2+) as cofactor.

It catalyses the reaction a UDP-3-O-[(3R)-3-hydroxyacyl]-N-acetyl-alpha-D-glucosamine + H2O = a UDP-3-O-[(3R)-3-hydroxyacyl]-alpha-D-glucosamine + acetate. It functions in the pathway glycolipid biosynthesis; lipid IV(A) biosynthesis; lipid IV(A) from (3R)-3-hydroxytetradecanoyl-[acyl-carrier-protein] and UDP-N-acetyl-alpha-D-glucosamine: step 2/6. Catalyzes the hydrolysis of UDP-3-O-myristoyl-N-acetylglucosamine to form UDP-3-O-myristoylglucosamine and acetate, the committed step in lipid A biosynthesis. The polypeptide is UDP-3-O-acyl-N-acetylglucosamine deacetylase (Rickettsia prowazekii (strain Madrid E)).